A 174-amino-acid chain; its full sequence is uncharacterized protein (174 aa).

The segment at 137–174 (TNVTLGDDTPKSYDAPVSAIPPPATATTANATGVKPLE) is disordered.

This is an uncharacterized protein from Acanthamoeba polyphaga (Amoeba).